Here is a 1243-residue protein sequence, read N- to C-terminus: MENCSAASTFLTDSLELELGTEWCKPPYFSCAVDNRGGGKHFSGESYLCSGALKRLILNLDPLPTNFEEDTLEIFGIQWVTETALVNSSRELFHLFRQQLYNLETLLQSSCDFGKVSTLHCKADNIRQQCVLFLHYVKVFIFRYLKVQNAESHVPVHPYEALEAQLPSVLIDELHGLLLYIGHLSELPSVNIGAFVNQNQIKLFPPSWHLLHLHLDIHWLVLEILYMLGEKLKQVVYGHQFMNLASDNLTNISLFEEHCETLLCDLISLSLNRYDKVRSSESLMSDQCPCLCIKELWVLLIHLLDHRSKWFVSESFWNWLNKLLKTLLEKSSDRRRSSMPVIQSRDPLGFSWWIITHVASFYKFDRHGVPDEMRKVESNWNFVEELLKKSISVQGVILEEQLRMYLHCCLTLCDFWEPNIAIVTILWEYYSKNLNSSFSISWLPFKGLANTMKSPLSMLEMVKTCCCDKQDQELYKSSSSYTIFLCILAKVVKKAMKSNGPHPWKQVKGRIYSKFHQKRMEELTEVGLQNFFSLFLLLAAVAEVEDVASHVLDLLNFLKPAFVTSQRALIWKGHMAFLLMYAQKNLDIGVLAEKFSCAFREKAKEFLVSKNEEMVQRQTIWTLLSIYIDGVQEVFETSYCLYPSHEKLLNDGFSMLLRACRESELRTVLSFLQAVLARIRSMHQQLCQELQRDNVDLFVQSSLSAKERHLAAVASALWRHFFSFLKSQRMSQVVPFSQLADAAADFTLLAMDMPSTAPSDFQPQPVISIIQLFGWDDIICPQVVARYLSHVLQNSTLCEALSHSGYVSFQALTVRSWIRCVLQMYIKNLSGPDDLLIDKNLEEAVEKEYMKQLVKLTRLLFNLSEVKSIFSKAQVEYLSISEDPKKALVRFFEAVGVTYGNVQTLSDKSAMVTKSLEYLGEVLKYIKPYLGKKVFSAGLQLTYGMMGILVKSWAQIFATSKAQKLLFRIIDCLLLPHAVLQQEKELPAPMLSAIQKSLPLYLQGMCIVCCQSQNPNAYLNQLLGNVIEQYIGRFLPASPYVSDLGQHPVLLALRNTATIPPISSLKKCIVQVIRKSYLEYKGSSPPPRLASILAFILQLFKETNTDIYEVELLLPGILKCLVLVSEPQVKRLATENLQYMVKACQVGSEEEPSSQLTSVFRQFIQDYGMRYYYQVYSILETVATLDQQVVIHLISTLTQSLKDSEQKWGLGRNIAQREAYSKLLSHLGQMGQDEMQRLENDNT.

This sequence belongs to the MMS22 family. MMS22L subfamily. As to quaternary structure, component of the MMS22L-TONSL complex, a complex at least composed of MMS22L and TONSL/NFKBIL2. Interacts with RAD51; interaction is direct. Degraded by the ubiquitin-proteasome system upon replication stress.

The protein resides in the nucleus. Its subcellular location is the chromosome. Component of the MMS22L-TONSL complex, a complex that promotes homologous recombination-mediated repair of double-strand breaks (DSBs) at stalled or collapsed replication forks. The MMS22L-TONSL complex is required to maintain genome integrity during DNA replication. It mediates the assembly of RAD51 filaments on single-stranded DNA (ssDNA): the MMS22L-TONSL complex is recruited to DSBs following histone replacement by histone chaperones and eviction of the replication protein A complex (RPA/RP-A) from DSBs. Following recruitment to DSBs, the TONSL-MMS22L complex promotes recruitment of RAD51 filaments and subsequent homologous recombination. Within the complex, MMS22L acts by binding ssDNA. The polypeptide is Protein MMS22-like (Homo sapiens (Human)).